Reading from the N-terminus, the 1013-residue chain is MPRSSATARKSHSNRQENGAAGSGKKVNKQKSNGQLNGNANGSSAPISGPSSQVDWPSSRSNSDTAINSTVATATKANGTTECSKADGNGRGYLNGYVKGNPDMSYGQANGAVPQNGGLTGQASRRTESSKRSGSNTSINPLQLASTILKSCPMYDTIAILIFLLQLPPMVLTLVQFLFASLTFMPPGGASAGSLTSNFDIFQGPAGTPSLGTMIAMDGFFLLFWGLFMWTWAQNFALDLAHVQVAITLGGGGSGKNGGVNTLCVGIVLVLHLIRSKGIQDFVLGHLLSAKVISPDLLSQYSHLLPSEFRRTEPQSSPSWIRSLLAVHILAQAGTAMARRSMAKNRAPAPPRTGKRVDTEASAGSQTQIDSAFESGTSVSSYIGADGQLITPATHKDGRDRLISAKKRRRQANQVRNRQPFWAALASTKVTVMREYEHSRALSKTARGLTMTEEDLQGVSLDDGLVWITDVDSSSIKFAAGDLVSEDAGVSGSCESGRLGEDMEPFYVCVNGALWATVTICKVQDVAKGSSVVHWRGEISGLAPNCAYTCSFLRSDTEEEICVMSVKTPIANDAEQVVSSVSTPPQPSYRPSSPTTTLKNSIVNAELKLNEKRTRLRKAKNDHKLVVSKIRKELDNYNHRLHSGTDENRQKQRSLQLERNIKQTEEATAVLEVQLDNLENIPEEELEEWSAEKAKYEHELELFNSAKEDVATARSAAAREVSQLESDLTSTIQRRERLQGRRTRVNEQYERIISANAQGLNERERRAAEQFAREQDQAKVEANFNEQFASISQSVQEYQLRTNQLWQQCVAIEQALQQQQQQQILLDSAPLTPEGNLPGTNTLSEAPTLSLGALTTSASSNRSLLGLSFPPLKSSPLQHASSPIGPTSSRPTSPTQAPSYLQHFPASPLINTASPFESDFIHRDRSFSNRSGHSSLYGSDFFDSGRRPPFQFDLSEKVVDKRRSSGSESNAPNLGLRPICSPFPRAGSRASGSGSGGSGSGSGSPSSATGKGN.

Disordered stretches follow at residues 1–65 (MPRS…NSDT) and 105–137 (SYGQANGAVPQNGGLTGQASRRTESSKRSGSNT). The segment covering 30–65 (QKSNGQLNGNANGSSAPISGPSSQVDWPSSRSNSDT) has biased composition (polar residues). 3 helical membrane-spanning segments follow: residues 158–178 (IAILIFLLQLPPMVLTLVQFL), 211–231 (LGTMIAMDGFFLLFWGLFMWT), and 254–274 (SGKNGGVNTLCVGIVLVLHLI). The interval 339-367 (RRSMAKNRAPAPPRTGKRVDTEASAGSQT) is disordered. The stretch at 596–782 (TTLKNSIVNA…REQDQAKVEA (187 aa)) forms a coiled coil. A compositionally biased stretch (polar residues) spans 875-899 (SPLQHASSPIGPTSSRPTSPTQAPS). 2 disordered regions span residues 875-902 (SPLQHASSPIGPTSSRPTSPTQAPSYLQ) and 953-1013 (DLSE…GKGN). Residues 954–965 (LSEKVVDKRRSS) are compositionally biased toward basic and acidic residues. Residues 993-1002 (SGSGGSGSGS) are compositionally biased toward gly residues. Residues 1003 to 1013 (GSPSSATGKGN) are compositionally biased toward low complexity.

It belongs to the acrB family.

The protein resides in the membrane. In terms of biological role, component of the regulatory network controlling carbon source utilization through ubiquitination and deubiquitination involving creA, creB, creC, creD and acrB. Involved in resistance to acriflavine, and required for normal growth on a range of sole carbon sources, including fructose, cellobiose, raffinose, and starch, and reduced utilization of amino acids, including GABA and beta-alanine, as sole carbon and nitrogen sources. This is Probable ubiquitination network signaling protein acrB (acrB) from Aspergillus oryzae (strain ATCC 42149 / RIB 40) (Yellow koji mold).